The chain runs to 765 residues: Periplasmic beta-glucosidase (765 aa).

Residues 1–20 (MKWLCSVGIAVSLALQPALA) form the signal peptide. Aspartate 287 is a catalytic residue.

This sequence belongs to the glycosyl hydrolase 3 family.

Its subcellular location is the periplasm. It carries out the reaction Hydrolysis of terminal, non-reducing beta-D-glucosyl residues with release of beta-D-glucose.. The polypeptide is Periplasmic beta-glucosidase (bglX) (Escherichia coli (strain K12)).